The sequence spans 193 residues: 3-isopropylmalate dehydratase small subunit (193 aa).

It belongs to the LeuD family. LeuD type 1 subfamily. Heterodimer of LeuC and LeuD.

It carries out the reaction (2R,3S)-3-isopropylmalate = (2S)-2-isopropylmalate. It participates in amino-acid biosynthesis; L-leucine biosynthesis; L-leucine from 3-methyl-2-oxobutanoate: step 2/4. In terms of biological role, catalyzes the isomerization between 2-isopropylmalate and 3-isopropylmalate, via the formation of 2-isopropylmaleate. The chain is 3-isopropylmalate dehydratase small subunit from Bacillus cereus (strain ZK / E33L).